The sequence spans 340 residues: uncharacterized protein (340 aa).

A run of 2 helical transmembrane segments spans residues 162-182 (PLVP…VLAG) and 239-259 (FWIS…IVVP).

Its subcellular location is the cell membrane. This is an uncharacterized protein from Mycobacterium bovis (strain ATCC BAA-935 / AF2122/97).